A 300-amino-acid polypeptide reads, in one-letter code: MAQKVEAQGGIGGDVWDDGAHDGVRKVHVGQGLDGVSFINVVYENGSQEVVGGEHGKKSLIGIETFEVDADDYIVAVQVTYDKIFGYDSDIITSITFSTFKGKTSPPYGLDTENKFVLKEKNGGKLVGFHGRAGEILYALGAYFTTTTTPLTPAKKLPAVGGDEGTAWDDGAFDGVKKVYIGQAQDGISAVKFVYDKGAEDIVGDEHGNDTLLGFEEFQLDYPSEYITAVEGTYDKIFGFETEVINMLRFKTNKKTSPPFGIEAGTAFELKEEGCKIVGFHGKVSAVLHQFGVHILPVTN.

Ala-2 bears the N-acetylalanine mark. 2 consecutive Jacalin-type lectin domains span residues 2 to 146 (AQKV…YFTT) and 154 to 297 (AKKL…HILP).

Belongs to the jacalin lectin family.

Its function is as follows. Involved in gametophytic development. The protein is Jacalin-related lectin 32 (JAL32) of Arabidopsis thaliana (Mouse-ear cress).